The primary structure comprises 461 residues: Fumarate hydratase class II (461 aa).

Residues 97 to 99, 127 to 130, 137 to 139, and Thr185 each bind substrate; these read SGT, HPND, and SSN. His186 serves as the catalytic Proton donor/acceptor. Ser316 is a catalytic residue. Substrate is bound by residues Ser317 and 322-324; that span reads KVN.

This sequence belongs to the class-II fumarase/aspartase family. Fumarase subfamily. As to quaternary structure, homotetramer.

The protein localises to the cytoplasm. The enzyme catalyses (S)-malate = fumarate + H2O. It functions in the pathway carbohydrate metabolism; tricarboxylic acid cycle; (S)-malate from fumarate: step 1/1. Functionally, involved in the TCA cycle. Catalyzes the stereospecific interconversion of fumarate to L-malate. The polypeptide is Fumarate hydratase class II (Staphylococcus saprophyticus subsp. saprophyticus (strain ATCC 15305 / DSM 20229 / NCIMB 8711 / NCTC 7292 / S-41)).